Reading from the N-terminus, the 355-residue chain is (R,S)-reticuline 7-O-methyltransferase (355 aa).

S-adenosyl-L-methionine contacts are provided by residues 197 to 200, aspartate 221, 221 to 222, 241 to 242, and lysine 255; these read VGGG, DL, and DM. Histidine 259 (proton acceptor) is an active-site residue.

This sequence belongs to the class I-like SAM-binding methyltransferase superfamily. Cation-independent O-methyltransferase family. Homodimer. As to expression, expressed in capsules, buds and stems, and at lower levels in leaves. Localized to parenchyma cells within the vascular bundle, but only to those cells distal to laticifers. In roots, found in the pericycle within the stele.

The enzyme catalyses (S)-reticuline + S-adenosyl-L-methionine = (S)-laudanine + S-adenosyl-L-homocysteine + H(+). It catalyses the reaction (R)-reticuline + S-adenosyl-L-methionine = (R)-laudanine + S-adenosyl-L-homocysteine + H(+). Its function is as follows. Catalyzes the transfer of a methyl group to reticuline to form laudanine. Methylates the simple catechols guaiacol and isovanillic acid as well as the tetrahydrobenzylisoquinolines (R)-reticuline, (S)-reticuline, (R,S)-orientaline, (R)-protosinomenine and (R,S)-isoorientaline. Involved in the production of laudanine. In Papaver somniferum (Opium poppy), this protein is (R,S)-reticuline 7-O-methyltransferase.